The chain runs to 1529 residues: DNA-directed RNA polymerase subunit beta' (1529 aa).

Positions 156, 158, 183, and 186 each coordinate Zn(2+). Residues aspartate 1328, aspartate 1330, and aspartate 1332 each contribute to the Mg(2+) site.

This sequence belongs to the RNA polymerase beta' chain family. RpoC1 subfamily. In plastids the minimal PEP RNA polymerase catalytic core is composed of four subunits: alpha, beta, beta', and beta''. When a (nuclear-encoded) sigma factor is associated with the core the holoenzyme is formed, which can initiate transcription. The cofactor is Mg(2+). Requires Zn(2+) as cofactor.

The protein resides in the plastid. It localises to the chloroplast. The enzyme catalyses RNA(n) + a ribonucleoside 5'-triphosphate = RNA(n+1) + diphosphate. Functionally, DNA-dependent RNA polymerase catalyzes the transcription of DNA into RNA using the four ribonucleoside triphosphates as substrates. In Tetradesmus obliquus (Green alga), this protein is DNA-directed RNA polymerase subunit beta'.